The sequence spans 357 residues: Peptide chain release factor 1 (357 aa).

At glutamine 235 the chain carries N5-methylglutamine.

This sequence belongs to the prokaryotic/mitochondrial release factor family. In terms of processing, methylated by PrmC. Methylation increases the termination efficiency of RF1.

The protein localises to the cytoplasm. Peptide chain release factor 1 directs the termination of translation in response to the peptide chain termination codons UAG and UAA. The sequence is that of Peptide chain release factor 1 from Alkaliphilus metalliredigens (strain QYMF).